We begin with the raw amino-acid sequence, 520 residues long: Succinyl-CoA:3-ketoacid coenzyme A transferase 2B, mitochondrial (520 aa).

A mitochondrion-targeting transit peptide spans 1–39; it reads MAALRLLAWALPRGVSALRPRPALPHRLIRRYVSDRSGS. Positions 280 to 299 are disordered; that stretch reads ERLTTRDSKPAPGSKDNDPS. Glutamate 342 (5-glutamyl coenzyme A thioester intermediate) is an active-site residue.

This sequence belongs to the 3-oxoacid CoA-transferase family. In terms of assembly, homodimer. Testis specific. Expressed in late spermatids. Accumulates during spermiogenesis. Also detected in the midpiece of spermatozoa.

It localises to the mitochondrion. The catalysed reaction is a 3-oxo acid + succinyl-CoA = a 3-oxoacyl-CoA + succinate. It participates in ketone metabolism; succinyl-CoA degradation; acetoacetyl-CoA from succinyl-CoA: step 1/1. Key enzyme for ketone body catabolism. Transfers the CoA moiety from succinate to acetoacetate. Formation of the enzyme-CoA intermediate proceeds via an unstable anhydride species formed between the carboxylate groups of the enzyme and substrate. Probably play and important roles in the energy metabolism of spermatozoa. The polypeptide is Succinyl-CoA:3-ketoacid coenzyme A transferase 2B, mitochondrial (Oxct2b) (Mus musculus (Mouse)).